The chain runs to 1338 residues: Serine/threonine-protein kinase cek1 (1338 aa).

The PAS domain occupies 28–98 (SKDENLQPSI…RAVNCLLKDD (71 aa)). Positions 484 to 554 (PDFAIGSPMS…GRSSLFSRGR (71 aa)) are disordered. Residues 491–501 (PMSQDSSNYSS) are compositionally biased toward polar residues. Position 525 is a phosphoserine (Ser-525). Residues 541–550 (PASNGRSSLF) show a composition bias toward polar residues. The 370-residue stretch at 589–958 (YKILKPISKG…VEEIKAHPFF (370 aa)) folds into the Protein kinase domain. ATP-binding positions include 595 to 603 (ISKGAFGSV) and Lys-618. Residue Asp-713 is the Proton acceptor of the active site. Ser-748 bears the Phosphoserine mark. A compositionally biased stretch (polar residues) spans 813–842 (ENSAEDSPTATNTPTSQVDESNIFRSTDSP). 3 disordered regions span residues 813-844 (ENSA…SPRV), 1010-1035 (KLEE…LRSN), and 1159-1185 (SSTM…TSSD). One can recognise an AGC-kinase C-terminal domain in the interval 959-1057 (KSVNWDTILE…RNLDFLNKAN (99 aa)). Positions 1159–1174 (SSTMSASQSQSSMHTA) are enriched in low complexity. Ser-1211 is modified (phosphoserine).

Belongs to the protein kinase superfamily. Ser/Thr protein kinase family.

It catalyses the reaction L-seryl-[protein] + ATP = O-phospho-L-seryl-[protein] + ADP + H(+). It carries out the reaction L-threonyl-[protein] + ATP = O-phospho-L-threonyl-[protein] + ADP + H(+). May facilitate the progression of anaphase through direct or indirect interaction with the cut8 protein. The protein is Serine/threonine-protein kinase cek1 (cek1) of Schizosaccharomyces pombe (strain 972 / ATCC 24843) (Fission yeast).